Here is a 381-residue protein sequence, read N- to C-terminus: Succinate--CoA ligase [ADP-forming] subunit beta (381 aa).

The ATP-grasp domain maps to 9–236 (KTIFADAGIP…ESYEDDLERK (228 aa)). Residues Lys-45, 52–54 (GRG), Glu-91, Val-94, and Glu-99 each bind ATP. Mg(2+) is bound by residues Asn-191 and Asp-205. Residues Asn-256 and 313–315 (GIT) contribute to the substrate site.

This sequence belongs to the succinate/malate CoA ligase beta subunit family. As to quaternary structure, heterotetramer of two alpha and two beta subunits. Requires Mg(2+) as cofactor.

It carries out the reaction succinate + ATP + CoA = succinyl-CoA + ADP + phosphate. The enzyme catalyses GTP + succinate + CoA = succinyl-CoA + GDP + phosphate. It participates in carbohydrate metabolism; tricarboxylic acid cycle; succinate from succinyl-CoA (ligase route): step 1/1. In terms of biological role, succinyl-CoA synthetase functions in the citric acid cycle (TCA), coupling the hydrolysis of succinyl-CoA to the synthesis of either ATP or GTP and thus represents the only step of substrate-level phosphorylation in the TCA. The beta subunit provides nucleotide specificity of the enzyme and binds the substrate succinate, while the binding sites for coenzyme A and phosphate are found in the alpha subunit. The protein is Succinate--CoA ligase [ADP-forming] subunit beta of Halorubrum lacusprofundi (strain ATCC 49239 / DSM 5036 / JCM 8891 / ACAM 34).